A 282-amino-acid chain; its full sequence is Ribosomal RNA small subunit methyltransferase I (282 aa).

This sequence belongs to the methyltransferase superfamily. RsmI family.

It is found in the cytoplasm. The catalysed reaction is cytidine(1402) in 16S rRNA + S-adenosyl-L-methionine = 2'-O-methylcytidine(1402) in 16S rRNA + S-adenosyl-L-homocysteine + H(+). Catalyzes the 2'-O-methylation of the ribose of cytidine 1402 (C1402) in 16S rRNA. The polypeptide is Ribosomal RNA small subunit methyltransferase I (Pseudomonas aeruginosa (strain ATCC 15692 / DSM 22644 / CIP 104116 / JCM 14847 / LMG 12228 / 1C / PRS 101 / PAO1)).